The following is a 49-amino-acid chain: Large ribosomal subunit protein bL33 (49 aa).

The protein belongs to the bacterial ribosomal protein bL33 family.

This Alkaliphilus metalliredigens (strain QYMF) protein is Large ribosomal subunit protein bL33.